An 81-amino-acid polypeptide reads, in one-letter code: Photosystem I iron-sulfur center (81 aa).

4Fe-4S ferredoxin-type domains are found at residues 2–31 (SHSVKIYDTCIGCTQCVRACPTDVLEMIPW) and 39–68 (IASAPRTEDCVGCKRCESACPTDFLSVRVY). Positions 11, 14, 17, 21, 48, 51, 54, and 58 each coordinate [4Fe-4S] cluster.

The eukaryotic PSI reaction center is composed of at least 11 subunits. [4Fe-4S] cluster is required as a cofactor.

The protein localises to the plastid. The protein resides in the chloroplast thylakoid membrane. The enzyme catalyses reduced [plastocyanin] + hnu + oxidized [2Fe-2S]-[ferredoxin] = oxidized [plastocyanin] + reduced [2Fe-2S]-[ferredoxin]. Apoprotein for the two 4Fe-4S centers FA and FB of photosystem I (PSI); essential for photochemical activity. FB is the terminal electron acceptor of PSI, donating electrons to ferredoxin. The C-terminus interacts with PsaA/B/D and helps assemble the protein into the PSI complex. Required for binding of PsaD and PsaE to PSI. PSI is a plastocyanin-ferredoxin oxidoreductase, converting photonic excitation into a charge separation, which transfers an electron from the donor P700 chlorophyll pair to the spectroscopically characterized acceptors A0, A1, FX, FA and FB in turn. The chain is Photosystem I iron-sulfur center from Phalaenopsis aphrodite subsp. formosana (Moth orchid).